The primary structure comprises 185 residues: Peptidyl-tRNA hydrolase (185 aa).

Residue Y14 participates in tRNA binding. The Proton acceptor role is filled by H19. Y65, N67, and N113 together coordinate tRNA.

The protein belongs to the PTH family. Monomer.

It localises to the cytoplasm. The catalysed reaction is an N-acyl-L-alpha-aminoacyl-tRNA + H2O = an N-acyl-L-amino acid + a tRNA + H(+). Hydrolyzes ribosome-free peptidyl-tRNAs (with 1 or more amino acids incorporated), which drop off the ribosome during protein synthesis, or as a result of ribosome stalling. In terms of biological role, catalyzes the release of premature peptidyl moieties from peptidyl-tRNA molecules trapped in stalled 50S ribosomal subunits, and thus maintains levels of free tRNAs and 50S ribosomes. The chain is Peptidyl-tRNA hydrolase from Rickettsia bellii (strain RML369-C).